The following is a 399-amino-acid chain: Serine/threonine transporter SstT (399 aa).

9 helical membrane passes run 8-28, 37-57, 77-97, 134-154, 178-198, 212-232, 284-304, 312-332, and 348-370; these read LSLV…AFLF, IFGE…VFVL, ILFL…IADL, PVVA…IILG, VIHL…AVTF, LLLV…PIMV, VIIP…ITVL, LGIS…SISA, and VACS…GMVI.

This sequence belongs to the dicarboxylate/amino acid:cation symporter (DAACS) (TC 2.A.23) family.

The protein resides in the cell inner membrane. The enzyme catalyses L-serine(in) + Na(+)(in) = L-serine(out) + Na(+)(out). The catalysed reaction is L-threonine(in) + Na(+)(in) = L-threonine(out) + Na(+)(out). Its function is as follows. Involved in the import of serine and threonine into the cell, with the concomitant import of sodium (symport system). The polypeptide is Serine/threonine transporter SstT (Acinetobacter baylyi (strain ATCC 33305 / BD413 / ADP1)).